The chain runs to 94 residues: uncharacterized protein (94 aa).

This sequence belongs to the phage portal family. HK97 subfamily.

This is an uncharacterized protein from Rickettsia conorii (strain ATCC VR-613 / Malish 7).